We begin with the raw amino-acid sequence, 581 residues long: Arginine--tRNA ligase (581 aa).

A 'HIGH' region motif is present at residues 126-136 (PNLAKEMHVGH).

This sequence belongs to the class-I aminoacyl-tRNA synthetase family. In terms of assembly, monomer.

It localises to the cytoplasm. It carries out the reaction tRNA(Arg) + L-arginine + ATP = L-arginyl-tRNA(Arg) + AMP + diphosphate. In Shewanella baltica (strain OS223), this protein is Arginine--tRNA ligase.